A 444-amino-acid chain; its full sequence is Enolase (444 aa).

Substrate-binding residues include H163 and E172. Catalysis depends on E215, which acts as the Proton donor. 3 residues coordinate Mg(2+): D250, E300, and D327. Positions 300 and 327 each coordinate substrate. The active-site Proton acceptor is K352. Residues 379–382 (SHRS) and K403 contribute to the substrate site.

The protein belongs to the enolase family. Homodimer. Mg(2+) is required as a cofactor.

It is found in the cytoplasm. It catalyses the reaction (2R)-2-phosphoglycerate = phosphoenolpyruvate + H2O. It functions in the pathway carbohydrate degradation; glycolysis; pyruvate from D-glyceraldehyde 3-phosphate: step 4/5. The sequence is that of Enolase (PGH1) from Solanum lycopersicum (Tomato).